The chain runs to 1109 residues: ABC transporter G family member 28 (1109 aa).

2 consecutive transmembrane segments (helical) span residues 5-25 (NSYFPGNFVPLFFVFIVLILQ) and 291-311 (NITAYGIMLFAGLGFLLIILY). Positions 325 to 411 (QAKSREKAVQ…DTKKGKKKEK (87 aa)) are disordered. Positions 339–357 (SQSREKWKSAKDIAKKHAT) are enriched in basic and acidic residues. The 243-residue stretch at 499-741 (VAFKDLSITL…FSSLGIVVPE (243 aa)) folds into the ABC transporter domain. Position 533 to 540 (533 to 540 (GPSGAGKT)) interacts with ATP. One can recognise an ABC transmembrane type-2 domain in the interval 859-1056 (QQYRYFLGRL…ALEAFVVSNA (198 aa)). 6 helical membrane-spanning segments follow: residues 879–899 (LAVDYLILLLAGICLGTLAKV), 904–924 (FGAMGYTYTVIAVSLLCKITA), 954–974 (TVDHFNTIVKPLVYLSMFYFF), 986–1006 (VVLICLVYCVTGIAYTLAILF), 1008–1028 (PGPAQLWSVLLPVVLTLIATS), and 1084–1104 (CLVFLTLTGILSRCAAFFCMV).

Belongs to the ABC transporter superfamily. ABCG family. Eye pigment precursor importer (TC 3.A.1.204) subfamily.

The protein resides in the membrane. This Arabidopsis thaliana (Mouse-ear cress) protein is ABC transporter G family member 28 (ABCG28).